The following is a 151-amino-acid chain: uncharacterized protein (151 aa).

Positions 122–151 (GVAQRQVPTTGTHSFFHCTSEGNKEKPHHF) are disordered.

This is an uncharacterized protein from Homo sapiens (Human).